Here is a 76-residue protein sequence, read N- to C-terminus: Translation initiation factor IF-1 (76 aa).

An S1-like domain is found at Met1–Lys72.

Belongs to the IF-1 family. In terms of assembly, component of the 30S ribosomal translation pre-initiation complex which assembles on the 30S ribosome in the order IF-2 and IF-3, IF-1 and N-formylmethionyl-tRNA(fMet); mRNA recruitment can occur at any time during PIC assembly.

The protein localises to the cytoplasm. Its function is as follows. One of the essential components for the initiation of protein synthesis. Stabilizes the binding of IF-2 and IF-3 on the 30S subunit to which N-formylmethionyl-tRNA(fMet) subsequently binds. Helps modulate mRNA selection, yielding the 30S pre-initiation complex (PIC). Upon addition of the 50S ribosomal subunit IF-1, IF-2 and IF-3 are released leaving the mature 70S translation initiation complex. This is Translation initiation factor IF-1 from Petrotoga mobilis (strain DSM 10674 / SJ95).